A 298-amino-acid polypeptide reads, in one-letter code: Thymidylate synthase (298 aa).

DUMP is bound by residues R25 and R159 to R160. The active-site Nucleophile is the C179. DUMP-binding positions include R200–D203, N211, and H241–Y243. D203 is a (6R)-5,10-methylene-5,6,7,8-tetrahydrofolate binding site. A297 lines the (6R)-5,10-methylene-5,6,7,8-tetrahydrofolate pocket.

Belongs to the thymidylate synthase family. Bacterial-type ThyA subfamily. Homodimer.

The protein localises to the cytoplasm. It carries out the reaction dUMP + (6R)-5,10-methylene-5,6,7,8-tetrahydrofolate = 7,8-dihydrofolate + dTMP. Its pathway is pyrimidine metabolism; dTTP biosynthesis. Its function is as follows. Catalyzes the reductive methylation of 2'-deoxyuridine-5'-monophosphate (dUMP) to 2'-deoxythymidine-5'-monophosphate (dTMP) while utilizing 5,10-methylenetetrahydrofolate (mTHF) as the methyl donor and reductant in the reaction, yielding dihydrofolate (DHF) as a by-product. This enzymatic reaction provides an intracellular de novo source of dTMP, an essential precursor for DNA biosynthesis. The polypeptide is Thymidylate synthase (Cereibacter sphaeroides (strain ATCC 17023 / DSM 158 / JCM 6121 / CCUG 31486 / LMG 2827 / NBRC 12203 / NCIMB 8253 / ATH 2.4.1.) (Rhodobacter sphaeroides)).